A 338-amino-acid chain; its full sequence is MKRLALALKQKKVASWKLEEVKELTELIKNSNTILIGSLEGFPADKLHEIRKKLRGKAIIKVTKNTLFKIAAKNAGISTEKLEQYLTGPNVFIFTKDNPFLTNMFFENYKLRRYAMPGDKAEEEVIIPAGDTGMPAGPILSVFGKLKVQTKVQDGKVHVVKDTVVAKPGDVIPTEALPILQKLGIMPVYVKLKIKVAYHEGLVIPAENLKLNLEGYRSNIAEAYRNAFTLAVEIAYPVPDVLKFTINKIFKNAITLASEIGYLTPESAQAVISKAVAKAYALATAISGKVDLGVKLPSAQQTQTQQSTAEEKKEEKKEEEKKGPSEEEIGSGLASLFG.

The tract at residues 297-338 (PSAQQTQTQQSTAEEKKEEKKEEEKKGPSEEEIGSGLASLFG) is disordered. Residues 298–308 (SAQQTQTQQST) are compositionally biased toward low complexity. Residues 309 to 325 (AEEKKEEKKEEEKKGPS) show a composition bias toward basic and acidic residues.

Belongs to the universal ribosomal protein uL10 family. In terms of assembly, part of the 50S ribosomal subunit. Forms part of the ribosomal stalk which helps the ribosome interact with GTP-bound translation factors. Forms a heptameric L10(L12)2(L12)2(L12)2 complex, where L10 forms an elongated spine to which the L12 dimers bind in a sequential fashion.

Its function is as follows. Forms part of the ribosomal stalk, playing a central role in the interaction of the ribosome with GTP-bound translation factors. The chain is Large ribosomal subunit protein uL10 from Saccharolobus islandicus (strain Y.N.15.51 / Yellowstone #2) (Sulfolobus islandicus).